Reading from the N-terminus, the 459-residue chain is Bifunctional protein GlmU (459 aa).

Residues 1 to 229 form a pyrophosphorylase region; the sequence is MSNYAIILAA…FDESLGVNDR (229 aa). UDP-N-acetyl-alpha-D-glucosamine contacts are provided by residues 8 to 11, Lys-22, Gln-72, and 77 to 78; these read LAAG and GT. Mg(2+) is bound at residue Asp-102. UDP-N-acetyl-alpha-D-glucosamine contacts are provided by Gly-139, Glu-154, Asn-169, and Asn-227. A Mg(2+)-binding site is contributed by Asn-227. The segment at 230–250 is linker; that stretch reads VALATAEKVMRHRIARQHMVN. The segment at 251-459 is N-acetyltransferase; that stretch reads GVTVVNPDSA…NKKPHHPSQK (209 aa). The UDP-N-acetyl-alpha-D-glucosamine site is built by Arg-332 and Lys-350. Catalysis depends on His-362, which acts as the Proton acceptor. UDP-N-acetyl-alpha-D-glucosamine-binding residues include Tyr-365 and Asn-376. Acetyl-CoA contacts are provided by residues Ala-379, 385 to 386, Ser-404, Ala-422, and Arg-439; that span reads NY.

The protein in the N-terminal section; belongs to the N-acetylglucosamine-1-phosphate uridyltransferase family. In the C-terminal section; belongs to the transferase hexapeptide repeat family. In terms of assembly, homotrimer. Mg(2+) serves as cofactor.

The protein resides in the cytoplasm. The catalysed reaction is alpha-D-glucosamine 1-phosphate + acetyl-CoA = N-acetyl-alpha-D-glucosamine 1-phosphate + CoA + H(+). It catalyses the reaction N-acetyl-alpha-D-glucosamine 1-phosphate + UTP + H(+) = UDP-N-acetyl-alpha-D-glucosamine + diphosphate. Its pathway is nucleotide-sugar biosynthesis; UDP-N-acetyl-alpha-D-glucosamine biosynthesis; N-acetyl-alpha-D-glucosamine 1-phosphate from alpha-D-glucosamine 6-phosphate (route II): step 2/2. It functions in the pathway nucleotide-sugar biosynthesis; UDP-N-acetyl-alpha-D-glucosamine biosynthesis; UDP-N-acetyl-alpha-D-glucosamine from N-acetyl-alpha-D-glucosamine 1-phosphate: step 1/1. The protein operates within bacterial outer membrane biogenesis; LPS lipid A biosynthesis. Catalyzes the last two sequential reactions in the de novo biosynthetic pathway for UDP-N-acetylglucosamine (UDP-GlcNAc). The C-terminal domain catalyzes the transfer of acetyl group from acetyl coenzyme A to glucosamine-1-phosphate (GlcN-1-P) to produce N-acetylglucosamine-1-phosphate (GlcNAc-1-P), which is converted into UDP-GlcNAc by the transfer of uridine 5-monophosphate (from uridine 5-triphosphate), a reaction catalyzed by the N-terminal domain. The chain is Bifunctional protein GlmU from Streptococcus agalactiae serotype V (strain ATCC BAA-611 / 2603 V/R).